The primary structure comprises 468 residues: 55 kDa erythrocyte membrane protein (468 aa).

Residues 73–154 (LVQFEKVTEE…MVSIKVIPNQ (82 aa)) form the PDZ domain. Residues 160-230 (ALQMFMRAQF…PSPELQEWRV (71 aa)) enclose the SH3 domain. Positions 284–453 (RKTLVLIGAS…SLKLLEEAFE (170 aa)) constitute a Guanylate kinase-like domain.

The protein belongs to the MAGUK family.

It localises to the membrane. The protein resides in the cell projection. It is found in the stereocilium. Its function is as follows. May play a role in the regulation of neutrophil polarization. The polypeptide is 55 kDa erythrocyte membrane protein (MPP1) (Gallus gallus (Chicken)).